The sequence spans 603 residues: HAUS augmin-like complex subunit 3 (603 aa).

Residue Ser2 is modified to N-acetylserine. 4 coiled-coil regions span residues 93 to 177 (RLDD…TQLM), 305 to 336 (VDKENLDAKISSLTSEIMKLEKEVTQIKDRSL), 389 to 426 (LSYEIELRKHRDIYRQLENLVQELSQSNMMLYKQLEML), and 458 to 495 (ENKKKELFLTHGNLEEVAEKLKQNISLVQDQLAVSAQE).

It belongs to the HAUS3 family. In terms of assembly, component of the HAUS augmin-like complex. The complex interacts with the gamma-tubulin ring complex and this interaction is required for spindle assembly. Interacts with EML3 (phosphorylated at 'Thr-881').

The protein resides in the cytoplasm. It is found in the cytoskeleton. Its subcellular location is the microtubule organizing center. The protein localises to the centrosome. It localises to the spindle. Functionally, contributes to mitotic spindle assembly, maintenance of centrosome integrity and completion of cytokinesis as part of the HAUS augmin-like complex. The sequence is that of HAUS augmin-like complex subunit 3 (HAUS3) from Homo sapiens (Human).